We begin with the raw amino-acid sequence, 461 residues long: Integrator complex subunit 12 (461 aa).

Positions Gly-42–Val-131 are disordered. Lys-68 participates in a covalent cross-link: Glycyl lysine isopeptide (Lys-Gly) (interchain with G-Cter in SUMO2). Residues Thr-88–Thr-124 show a composition bias toward basic and acidic residues. The residue at position 127 (Ser-127) is a Phosphoserine. A PHD-type zinc finger spans residues Gly-158–Gln-214. Lys-253 participates in a covalent cross-link: Glycyl lysine isopeptide (Lys-Gly) (interchain with G-Cter in SUMO2). Residues Ala-302–Lys-328 show a composition bias toward polar residues. The tract at residues Ala-302 to Ala-443 is disordered. Composition is skewed to low complexity over residues Gly-348–Val-357 and Val-381–Ser-436.

This sequence belongs to the Integrator subunit 12 family. In terms of assembly, component of the Integrator complex, composed of core subunits INTS1, INTS2, INTS3, INTS4, INTS5, INTS6, INTS7, INTS8, INTS9/RC74, INTS10, INTS11/CPSF3L, INTS12, INTS13, INTS14 and INTS15. The core complex associates with protein phosphatase 2A subunits PPP2CA and PPP2R1A, to form the Integrator-PP2A (INTAC) complex. Post-translationally, dephosphorylated at Ser-127 by the PNUTS-PP1 complex, promoting RNA polymerase II transcription pause-release.

It is found in the nucleus. Its function is as follows. Component of the integrator complex, a multiprotein complex that terminates RNA polymerase II (Pol II) transcription in the promoter-proximal region of genes. The integrator complex provides a quality checkpoint during transcription elongation by driving premature transcription termination of transcripts that are unfavorably configured for transcriptional elongation: the complex terminates transcription by (1) catalyzing dephosphorylation of the C-terminal domain (CTD) of Pol II subunit POLR2A/RPB1 and SUPT5H/SPT5, (2) degrading the exiting nascent RNA transcript via endonuclease activity and (3) promoting the release of Pol II from bound DNA. The integrator complex is also involved in terminating the synthesis of non-coding Pol II transcripts, such as enhancer RNAs (eRNAs), small nuclear RNAs (snRNAs), telomerase RNAs and long non-coding RNAs (lncRNAs). Mediates recruitment of cytoplasmic dynein to the nuclear envelope, probably as component of the integrator complex. The sequence is that of Integrator complex subunit 12 (Ints12) from Mus musculus (Mouse).